Reading from the N-terminus, the 473-residue chain is Lysophospholipid acyltransferase 5 (473 aa).

Transmembrane regions (helical) follow at residues 20-40 (LLISVLAGYPLAVVHRTFFYN), 43-63 (AQHQHLFFVIVGLSLWMFNCG), 66-86 (VIHPILSIFGAFFITNFMAGT), and 88-108 (ASIYAAHIVFLGHLLIGYWFH). Residues Asn-315 and His-351 contribute to the active site. 3 helical membrane-spanning segments follow: residues 341-361 (VITLSYLAIWHGYHLGYFLLF), 396-416 (FIWIFGKLTISYSMGFAFLMF), and 431-451 (LYFIGFIIYFIVWPILHMVLL). The Di-lysine motif motif lies at 470-473 (KKEL).

It belongs to the membrane-bound acyltransferase family.

The protein localises to the endoplasmic reticulum membrane. It catalyses the reaction a 1-acyl-sn-glycero-3-phosphocholine + an acyl-CoA = a 1,2-diacyl-sn-glycero-3-phosphocholine + CoA. The enzyme catalyses a 1-acyl-sn-glycero-3-phospho-L-serine + an acyl-CoA = a 1,2-diacyl-sn-glycero-3-phospho-L-serine + CoA. It carries out the reaction a 1-acyl-sn-glycero-3-phosphoethanolamine + an acyl-CoA = a 1,2-diacyl-sn-glycero-3-phosphoethanolamine + CoA. It functions in the pathway lipid metabolism; phospholipid metabolism. Probable acyltransferase which may mediate the conversion of lysophosphatidylcholine (1-acyl-sn-glycero-3-phosphocholine or LPC) into phosphatidylcholine (1,2-diacyl-sn-glycero-3-phosphocholine or PC) (LPCAT activity). May also catalyze the conversion of lysophosphatidylethanolamine (1-acyl-2-hydroxy-sn-glycero-3-phosphoethanolamine or LPE) into phosphatidylethanolamine (1,2-diacyl-sn-glycero-3-phosphoethanolamine or PE) (LPEAT activity), as well as the conversion of lysophosphatidylserine (1-acyl-2-hydroxy-sn-glycero-3-phospho-L-serine or LPS) into phosphatidylserine (1,2-diacyl-sn-glycero-3-phospho-L-serine or PS) (LPSAT activity). Required for incorporation of arachidonic acid into PC, PE, and PS. In Caenorhabditis elegans, this protein is Lysophospholipid acyltransferase 5 (mboa-6).